The chain runs to 261 residues: Aromatic peroxygenase (261 aa).

C36 is a binding site for heme. N-linked (GlcNAc...) asparagine glycans are attached at residues N100, N137, N141, and N220.

The protein belongs to the chloroperoxidase family. Requires heme b as cofactor. Post-translationally, N-glycosylated.

In terms of biological role, aromatic peroxidase that oxidizes aryl alcohols into the corresponding aldehydes and then into the corresponding benzoic acids. Catalyzes the regioselective peroxide-dependent hydroxylation of naphthalene to 1-naphthol and to a far lesser extent 2-naphthol via a naphthalene 1,2-oxide intermediate. Halogenates phenol to 2-bromophenol and 4-bromophenol. Oxidizes the sulfur-containing heterocycle dibenzothiophene to yield sulfoxidation products, and trace amounts of ring-hydroxylation products. This chain is Aromatic peroxygenase, found in Coprinellus radians (Coprophilous mushroom).